Consider the following 334-residue polypeptide: Holliday junction branch migration complex subunit RuvB (334 aa).

Residues 4–184 form a large ATPase domain (RuvB-L) region; sequence ADRLIQPQLQ…FGIPLRLEFY (181 aa). ATP-binding positions include Arg-24, Gly-65, Lys-68, Thr-69, Thr-70, 131–133, Arg-174, Tyr-184, and Arg-221; that span reads EDY. Position 69 (Thr-69) interacts with Mg(2+). Residues 185-255 form a small ATPAse domain (RuvB-S) region; that stretch reads NVKDLSTIVT…VAEQALDLLD (71 aa). The interval 258–334 is head domain (RuvB-H); sequence GEGFDYMDRK…YLHFGMIKPE (77 aa). DNA contacts are provided by Arg-294, Arg-313, and Arg-318.

Belongs to the RuvB family. As to quaternary structure, homohexamer. Forms an RuvA(8)-RuvB(12)-Holliday junction (HJ) complex. HJ DNA is sandwiched between 2 RuvA tetramers; dsDNA enters through RuvA and exits via RuvB. An RuvB hexamer assembles on each DNA strand where it exits the tetramer. Each RuvB hexamer is contacted by two RuvA subunits (via domain III) on 2 adjacent RuvB subunits; this complex drives branch migration. In the full resolvosome a probable DNA-RuvA(4)-RuvB(12)-RuvC(2) complex forms which resolves the HJ.

It localises to the cytoplasm. The catalysed reaction is ATP + H2O = ADP + phosphate + H(+). Its function is as follows. The RuvA-RuvB-RuvC complex processes Holliday junction (HJ) DNA during genetic recombination and DNA repair, while the RuvA-RuvB complex plays an important role in the rescue of blocked DNA replication forks via replication fork reversal (RFR). RuvA specifically binds to HJ cruciform DNA, conferring on it an open structure. The RuvB hexamer acts as an ATP-dependent pump, pulling dsDNA into and through the RuvAB complex. RuvB forms 2 homohexamers on either side of HJ DNA bound by 1 or 2 RuvA tetramers; 4 subunits per hexamer contact DNA at a time. Coordinated motions by a converter formed by DNA-disengaged RuvB subunits stimulates ATP hydrolysis and nucleotide exchange. Immobilization of the converter enables RuvB to convert the ATP-contained energy into a lever motion, pulling 2 nucleotides of DNA out of the RuvA tetramer per ATP hydrolyzed, thus driving DNA branch migration. The RuvB motors rotate together with the DNA substrate, which together with the progressing nucleotide cycle form the mechanistic basis for DNA recombination by continuous HJ branch migration. Branch migration allows RuvC to scan DNA until it finds its consensus sequence, where it cleaves and resolves cruciform DNA. In Shewanella sp. (strain ANA-3), this protein is Holliday junction branch migration complex subunit RuvB.